The sequence spans 454 residues: MSAKISETLTFECETGNYHTFCPISCVSWLYQKIEDSFFLMVGTKTCGYFLQNTLGVMIFAEPRYAMAELEEGDISAQLNDYEELKRLCIRIKKDRDPNVIIWIGTCTTEIIKMDLEGMAPKLESEIGIPIIVARANGLDHAFTQGEDTVLAAMAHRCLEQRLFVRERNGTIQKFPPPLEKEGEFIEYGDHPSLALFGSLPSNVASQLSPELRRQSVKVSGWLPAQRYTHLPSLGNGVYVCGINPFLSRTAATLVRRERCRLIGAPFPIGPDGTRAWIEKICPVFDIETQGLEEREKQIWESLKDYISLVHGKSVFFMGDNLLEISLARFLIRCGMIVYEIGIPYMDKRYQAAELALLRDTCIKMCVPIPRIVEKPDNYNQLRRIRELQPDLAITGMAHADPLEARGMNTKWSVEFTFAQIHGFANARNVLELVTRPLRCNDNLEDLGRTTLVK.

The [4Fe-4S] cluster site is built by Cys22, Cys47, and Cys107.

The protein belongs to the BchN/ChlN family. In terms of assembly, protochlorophyllide reductase is composed of three subunits; ChlL, ChlN and ChlB. Forms a heterotetramer of two ChlB and two ChlN subunits. [4Fe-4S] cluster serves as cofactor.

It is found in the plastid. The protein localises to the chloroplast. The enzyme catalyses chlorophyllide a + oxidized 2[4Fe-4S]-[ferredoxin] + 2 ADP + 2 phosphate = protochlorophyllide a + reduced 2[4Fe-4S]-[ferredoxin] + 2 ATP + 2 H2O. Its pathway is porphyrin-containing compound metabolism; chlorophyll biosynthesis (light-independent). Functionally, component of the dark-operative protochlorophyllide reductase (DPOR) that uses Mg-ATP and reduced ferredoxin to reduce ring D of protochlorophyllide (Pchlide) to form chlorophyllide a (Chlide). This reaction is light-independent. The NB-protein (ChlN-ChlB) is the catalytic component of the complex. In Cycas taitungensis (Prince sago), this protein is Light-independent protochlorophyllide reductase subunit N.